Here is a 306-residue protein sequence, read N- to C-terminus: Diterpene cyclase eriG (306 aa).

The next 2 membrane-spanning stretches (helical) occupy residues Ile13 to Ala33 and Ala43 to Phe63. Asn64 is a glycosylation site (N-linked (GlcNAc...) asparagine). 4 helical membrane-spanning segments follow: residues Phe115–Gly135, Ile161–Leu181, Leu213–Phe233, and Met265–Leu285.

Belongs to the UbiA prenyltransferase family. It depends on Mg(2+) as a cofactor.

The protein resides in the membrane. The enzyme catalyses (2E,6E,10E)-geranylgeranyl diphosphate = (-)-cyatha-3,12-diene + diphosphate. Its pathway is secondary metabolite biosynthesis. Its activity is regulated as follows. EDTA completely blocks the reaction. Functionally, diterpene cyclase; part of the gene cluster that mediates the biosynthesis of erinacines, cyathane-xylosides that show unique biological activities, including leishmanicidal activity, stimulating activity for nerve growth-factor synthesis, and agonistic activity toward the kappa opioid receptor. Within the pathway, eriG acts as a diterpene cyclase that converts geranylgeranyl diphosphate (GGPP) into cyatha-3,12-diene. EriG is unable to use geranyl diphosphate (GPP) or farnesyl diphosphate (FPP) as substrates. The first step of the erinacines biosynthesis pathway is catalyzed by the geranylgeranyl diphosphate (GGPP) synthase eriE via conversion of farnesyl pyrophosphate and isopentyl pyrophosphate into geranylgeranyl pyrophosphate (GGPP). GGPP is then substrate of the diterpene cyclase eriG for the production of cyatha-3,12-diene. The cytochrome P450 monooxygenase eriI then hydroxylates cyatha-3,12-diene at C-14 of the seven-membered ring to produce erinacol, which is further hydroxylated at C-15 by the cytochrome P450 monooxygenase eriC to yield cyathadiol. The cytochrome P450 monooxygenase eriA then catalyzes C-11 hydroxylation in the presence of the short chain dehydrogenase/reductase (SDR) eriH, which leads to the production of cyathatriol. The acetyltransferase eriL converts cyathatriol into 11-O-acetyl-cyathatriol. The SDR eriH catalyzes further oxidation of 11-O-acetyl-cyathatriol into 1-O-acetylcyathin A3. Finally, the glycosyl transferase eriJ tranfers xylose from UDP-xylose onto C-14 of 11-O-acetyl-cyathatriol to form eracine Q. EriJ is also able to convert 11-O-acetyl-cyathatriol to eracine Q2 by using UDP-D-glucose as cosubstrate, but at a lower rate. This chain is Diterpene cyclase eriG, found in Hericium erinaceus (Lion's mane mushroom).